The primary structure comprises 811 residues: Ribonucleoside-diphosphate reductase large subunit (811 aa).

Substrate-binding positions include Thr231, 246 to 247 (SC), Gly277, 450 to 454 (NLCTE), and 636 to 640 (PTASS). A disulfide bridge links Cys247 with Cys467. Residue Asn450 is the Proton acceptor of the active site. Cys452 functions as the Cysteine radical intermediate in the catalytic mechanism. Glu454 functions as the Proton acceptor in the catalytic mechanism.

Belongs to the ribonucleoside diphosphate reductase large chain family. Heterotetramer composed of a homodimer of the large subunit (R1) and a homodimer of the small subunit (R2). Larger multisubunit protein complex are also active, composed of (R1)n(R2)n.

The enzyme catalyses a 2'-deoxyribonucleoside 5'-diphosphate + [thioredoxin]-disulfide + H2O = a ribonucleoside 5'-diphosphate + [thioredoxin]-dithiol. Functionally, ribonucleoside-diphosphate reductase holoenzyme provides the precursors necessary for viral DNA synthesis. Allows virus growth in non-dividing cells, as well as reactivation from latency in infected hosts. Catalyzes the biosynthesis of deoxyribonucleotides from the corresponding ribonucleotides. The polypeptide is Ribonucleoside-diphosphate reductase large subunit (Amazona oratrix (yellow-headed parrot)).